Here is a 126-residue protein sequence, read N- to C-terminus: Large ribosomal subunit protein bL17 (126 aa).

The protein belongs to the bacterial ribosomal protein bL17 family. As to quaternary structure, part of the 50S ribosomal subunit. Contacts protein L32.

In Laribacter hongkongensis (strain HLHK9), this protein is Large ribosomal subunit protein bL17.